We begin with the raw amino-acid sequence, 178 residues long: Large ribosomal subunit protein uL6 (178 aa).

The protein belongs to the universal ribosomal protein uL6 family. Part of the 50S ribosomal subunit.

This protein binds to the 23S rRNA, and is important in its secondary structure. It is located near the subunit interface in the base of the L7/L12 stalk, and near the tRNA binding site of the peptidyltransferase center. The polypeptide is Large ribosomal subunit protein uL6 (Sulfurovum sp. (strain NBC37-1)).